The primary structure comprises 335 residues: Methionine import ATP-binding protein MetN (335 aa).

The ABC transporter domain occupies 2 to 241 (IQFQRLHKSY…PKHATTRRFV (240 aa)). Residue 38–45 (GHSGAGKS) coordinates ATP.

Belongs to the ABC transporter superfamily. Methionine importer (TC 3.A.1.24) family. As to quaternary structure, the complex is composed of two ATP-binding proteins (MetN), two transmembrane proteins (MetI) and a solute-binding protein (MetQ).

It is found in the cell inner membrane. The catalysed reaction is L-methionine(out) + ATP + H2O = L-methionine(in) + ADP + phosphate + H(+). It catalyses the reaction D-methionine(out) + ATP + H2O = D-methionine(in) + ADP + phosphate + H(+). Its function is as follows. Part of the ABC transporter complex MetNIQ involved in methionine import. Responsible for energy coupling to the transport system. This Xanthomonas axonopodis pv. citri (strain 306) protein is Methionine import ATP-binding protein MetN.